Here is a 305-residue protein sequence, read N- to C-terminus: UDP-3-O-acyl-N-acetylglucosamine deacetylase (305 aa).

The Zn(2+) site is built by H78, H237, and D241. The active-site Proton donor is H264.

The protein belongs to the LpxC family. It depends on Zn(2+) as a cofactor.

The enzyme catalyses a UDP-3-O-[(3R)-3-hydroxyacyl]-N-acetyl-alpha-D-glucosamine + H2O = a UDP-3-O-[(3R)-3-hydroxyacyl]-alpha-D-glucosamine + acetate. It functions in the pathway glycolipid biosynthesis; lipid IV(A) biosynthesis; lipid IV(A) from (3R)-3-hydroxytetradecanoyl-[acyl-carrier-protein] and UDP-N-acetyl-alpha-D-glucosamine: step 2/6. Functionally, catalyzes the hydrolysis of UDP-3-O-myristoyl-N-acetylglucosamine to form UDP-3-O-myristoylglucosamine and acetate, the committed step in lipid A biosynthesis. This is UDP-3-O-acyl-N-acetylglucosamine deacetylase from Dechloromonas aromatica (strain RCB).